We begin with the raw amino-acid sequence, 119 residues long: Beta-2-microglobulin (119 aa).

The signal sequence occupies residues 1–20 (MACSVVVALLALLSLSGLEA). In terms of domain architecture, Ig-like C1-type spans 25-114 (PKIQVYSRHP…VTFSTPKTVK (90 aa)). The cysteines at positions 45 and 100 are disulfide-linked.

It belongs to the beta-2-microglobulin family. Heterodimer of an alpha chain and a beta chain. Beta-2-microglobulin is the beta-chain of major histocompatibility complex class I molecules.

It localises to the secreted. Its function is as follows. Component of the class I major histocompatibility complex (MHC). Involved in the presentation of peptide antigens to the immune system. This Mico emiliae (Emilia's marmoset) protein is Beta-2-microglobulin (B2M).